The chain runs to 63 residues: Large ribosomal subunit protein bL32 (63 aa).

Residues 1-27 form a disordered region; the sequence is MANPKAKMSKSRRDKRRAQFNARTKPV. The segment covering 7 to 18 has biased composition (basic residues); the sequence is KMSKSRRDKRRA.

The protein belongs to the bacterial ribosomal protein bL32 family.

The chain is Large ribosomal subunit protein bL32 from Chlorobium phaeobacteroides (strain DSM 266 / SMG 266 / 2430).